The following is a 344-amino-acid chain: L-lactate dehydrogenase B (344 aa).

NAD(+)-binding positions include 62–67 (DALPDK) and R109. The substrate site is built by R116, N148, and R179. Residue N148 participates in NAD(+) binding. Residue H203 is the Proton acceptor of the active site. A substrate-binding site is contributed by T258.

Belongs to the LDH/MDH superfamily. LDH family. In terms of assembly, tetramer that arise from random association of LDH-A and LDH-B.

The catalysed reaction is (S)-lactate + NAD(+) = pyruvate + NADH + H(+). It participates in fermentation; pyruvate fermentation to lactate; (S)-lactate from pyruvate: step 1/1. In Hordeum vulgare (Barley), this protein is L-lactate dehydrogenase B.